The sequence spans 132 residues: D-ribose pyranase (132 aa).

The Proton donor role is filled by histidine 20. Substrate is bound by residues aspartate 28, histidine 99, and 121-123 (YSN).

Belongs to the RbsD / FucU family. RbsD subfamily. In terms of assembly, homodecamer.

The protein localises to the cytoplasm. The enzyme catalyses beta-D-ribopyranose = beta-D-ribofuranose. It participates in carbohydrate metabolism; D-ribose degradation; D-ribose 5-phosphate from beta-D-ribopyranose: step 1/2. Catalyzes the interconversion of beta-pyran and beta-furan forms of D-ribose. This chain is D-ribose pyranase, found in Pseudomonas putida (strain ATCC 47054 / DSM 6125 / CFBP 8728 / NCIMB 11950 / KT2440).